The chain runs to 362 residues: Talin rod domain-containing protein 1 (362 aa).

The interval Met1–Ser26 is disordered. Ala2 is modified (N-acetylalanine). Residues Ala13–Ser26 are compositionally biased toward low complexity.

May homodimerize. Interacts with F-actin.

Its function is as follows. Actin-binding protein which may have an oncogenic function and regulates cell proliferation, migration and invasion in cancer cells. The polypeptide is Talin rod domain-containing protein 1 (Homo sapiens (Human)).